Here is a 286-residue protein sequence, read N- to C-terminus: Protoheme IX farnesyltransferase (286 aa).

8 helical membrane passes run 14–31 (FRLT…YILA), 38–58 (WLNL…ANII), 94–114 (LFLI…ALIL), 135–155 (IAVF…WIAV), 165–185 (VLFA…AWVL), 207–227 (TATI…LPYL), 228–248 (FGMS…LFFF), and 262–282 (ALLL…AFVL).

It belongs to the UbiA prenyltransferase family. Protoheme IX farnesyltransferase subfamily.

It localises to the cell inner membrane. The catalysed reaction is heme b + (2E,6E)-farnesyl diphosphate + H2O = Fe(II)-heme o + diphosphate. Its pathway is porphyrin-containing compound metabolism; heme O biosynthesis; heme O from protoheme: step 1/1. Converts heme B (protoheme IX) to heme O by substitution of the vinyl group on carbon 2 of heme B porphyrin ring with a hydroxyethyl farnesyl side group. The polypeptide is Protoheme IX farnesyltransferase (Cytophaga hutchinsonii (strain ATCC 33406 / DSM 1761 / CIP 103989 / NBRC 15051 / NCIMB 9469 / D465)).